The primary structure comprises 177 residues: Large ribosomal subunit protein uL6 (177 aa).

It belongs to the universal ribosomal protein uL6 family. In terms of assembly, part of the 50S ribosomal subunit.

Its function is as follows. This protein binds to the 23S rRNA, and is important in its secondary structure. It is located near the subunit interface in the base of the L7/L12 stalk, and near the tRNA binding site of the peptidyltransferase center. The sequence is that of Large ribosomal subunit protein uL6 from Bradyrhizobium sp. (strain BTAi1 / ATCC BAA-1182).